Here is a 697-residue protein sequence, read N- to C-terminus: Phosphatase and actin regulator 4-B (697 aa).

The stretch at 42 to 67 (EVLERKISMRKPREELVKRGLIVDVP) is one RPEL 1 repeat. 2 disordered regions span residues 63–381 (IVDV…LTLA) and 450–569 (LKVP…SKDE). Residues 189 to 202 (HVPEKTSEKYRPKS) are compositionally biased toward basic and acidic residues. Composition is skewed to pro residues over residues 317-326 (PSPPLPPKRA) and 370-380 (APNPPVPPLTL). Composition is skewed to acidic residues over residues 454 to 469 (DDDD…DESL), 501 to 514 (QEED…DTDS), and 522 to 532 (EEDEDEEEEET). RPEL repeat units lie at residues 579–604 (TQLN…QKNE) and 616–641 (RRLT…RFNE).

Belongs to the phosphatase and actin regulator family. As to quaternary structure, binds ppp1ca and actin.

The protein localises to the cytoplasm. It is found in the cell projection. It localises to the lamellipodium. Functionally, regulator of protein phosphatase 1 (PP1) required for neural tube and optic fissure closure, and enteric neural crest cell (ENCCs) migration during development. Acts as an activator of PP1. During neural tube closure, localizes to the ventral neural tube and activates PP1, leading to down-regulate cell proliferation within cranial neural tissue and the neural retina. Also acts as a regulator of migration of enteric neural crest cells (ENCCs) by activating PP1, leading to repression of the integrin signaling through the rho/rock pathway. This is Phosphatase and actin regulator 4-B (phactr4-b) from Xenopus laevis (African clawed frog).